Here is a 413-residue protein sequence, read N- to C-terminus: Eukaryotic initiation factor 4A-7 (413 aa).

The Q motif motif lies at 40–68 (DSFDAMGLQENLLRGIYAYGFEKPSAIQQ). One can recognise a Helicase ATP-binding domain in the interval 71-241 (IVPFCKGLDV…RKFMNKPVRI (171 aa)). An ATP-binding site is contributed by 84–91 (AQSGTGKT). Positions 189–192 (DEAD) match the DEAD box motif. Residues 252 to 413 (GIKQFYVNVD…ELPANVADLL (162 aa)) form the Helicase C-terminal domain.

Belongs to the DEAD box helicase family. eIF4A subfamily. EIF4F is a multi-subunit complex, the composition of which varies with external and internal environmental conditions. It is composed of at least EIF4A, EIF4E and EIF4G.

The enzyme catalyses ATP + H2O = ADP + phosphate + H(+). Functionally, ATP-dependent RNA helicase which is a subunit of the eIF4F complex involved in cap recognition and is required for mRNA binding to ribosome. In the current model of translation initiation, eIF4A unwinds RNA secondary structures in the 5'-UTR of mRNAs which is necessary to allow efficient binding of the small ribosomal subunit, and subsequent scanning for the initiator codon. This Nicotiana tabacum (Common tobacco) protein is Eukaryotic initiation factor 4A-7.